Reading from the N-terminus, the 160-residue chain is Ubiquitin-like protein ATG12 (160 aa).

The disordered stretch occupies residues 1–40; sequence MSETPKDQGPSSPSPSPSPSAASPMPLADNEVAGSGASSP. Residue glycine 160 forms a Glycyl lysine isopeptide (Gly-Lys) (interchain with K-102 in ATG5) linkage.

The protein belongs to the ATG12 family. As to quaternary structure, forms a conjugate with ATG5. Forms a thioester bond with the 'Cys-196' of ATG10. Interacts with the ATG7 C-terminal 40 amino acids domain. The ATG12-ATG5 conjugate forms a complex with several units of ATG16. The ATG12-ATG5 conjugate also associates with ATG3.

The protein localises to the preautophagosomal structure membrane. Functionally, ubiquitin-like protein involved in cytoplasm to vacuole transport (Cvt), autophagy vesicles formation, mitophagy, and nucleophagy. Conjugation with ATG5 through a ubiquitin-like conjugating system involving also ATG7 as an E1-like activating enzyme and ATG10 as an E2-like conjugating enzyme, is essential for its function. The ATG12-ATG5 conjugate acts as an E3-like enzyme which is required for lipidation of ATG8 and ATG8 association to the vesicle membranes. ATG12-ATG5 rearranges the ATG3 catalytic center and enhances its E2 activity. Autophagy is required for proper vegetative growth, asexual/sexual reproduction, and full virulence. Autophagy is particularly involved in the biosynthesis of deoxynivalenol (DON), an important virulence determinant. This Gibberella zeae (strain ATCC MYA-4620 / CBS 123657 / FGSC 9075 / NRRL 31084 / PH-1) (Wheat head blight fungus) protein is Ubiquitin-like protein ATG12.